The following is a 499-amino-acid chain: MSSGANGNSKSLAYDIKFTKLFINGEFVDSISGSTFETIDPATEEVLATVAEGREEDVDLAVKAAREAFDNGPWPRLSGEARRKILLKFADLIEENADEIATLEVIDTGKPFQIARYVENSWTSETFRYFAGAADKIRGATLKMSSDFQAYTLREPIGVVGHIIPWNAPAYLFAMKVAPALAAGCTVVIKPAENTPLVGLFMAYLSKLAGVPDGVINVVNGFGSTAGAAVSSHMDIDAVTFTGSTKVGRTIMQAAAASNLKPVSLELGGKSPFIVFDDADIEKAAEIAVLGVLSNKGELCVAGSRVFVHEGIYDAFVKKLEATVKNWATGDRFDAATRHGPQNNKQQYEKVLSYIELGKKEGATLVTGGKPFGNKGYYIEPTLFTNVTDEMTIAKEEIFGPVIMVLKFKTIEEVIRRANATTYGLAAGIMTKNIDIANTVTRSIRAGSVWVNCYLALDRDTPFGGYKMSGFGREQGLEALEHYLQVKTVTTPIYNSPWL.

NAD(+)-binding positions include 164-166 (IPW), 164-167 (IPWN), 190-193 (KPAE), 223-224 (GS), 243-244 (GS), 243-248 (GSTKVG), and 266-268 (ELG). Residue E266 is the Proton acceptor of the active site. C300 functions as the Nucleophile in the catalytic mechanism. Residues 346–350 (QQYEK) and 397–399 (EIF) contribute to the NAD(+) site.

It belongs to the aldehyde dehydrogenase family. In terms of assembly, homotetramer. As to expression, expressed in flowers and disk florets.

It catalyses the reaction an aldehyde + NAD(+) + H2O = a carboxylate + NADH + 2 H(+). The enzyme catalyses an aldehyde + NADP(+) + H2O = a carboxylate + NADPH + 2 H(+). It carries out the reaction octanal + NADP(+) + H2O = octanoate + NADPH + 2 H(+). The catalysed reaction is (1R,3R)-chrysanthemal + NAD(+) + H2O = (1R,3R)-chrysanthemate + NADH + 2 H(+). It catalyses the reaction (1R,3R)-chrysanthemal + NADP(+) + H2O = (1R,3R)-chrysanthemate + NADPH + 2 H(+). The enzyme catalyses (E)-hept-2-enal + NADP(+) + H2O = (E)-hept-2-enoate + NADPH + 2 H(+). It carries out the reaction dodecanal + NADP(+) + H2O = dodecanoate + NADPH + 2 H(+). The catalysed reaction is citral + NADP(+) + H2O = 3,7-dimethylocta-2,6-dienoate + NADPH + 2 H(+). It catalyses the reaction perillyl aldehyde + NADP(+) + H2O = perillate + NADPH + 2 H(+). The enzyme catalyses (2E,6E)-farnesal + NADP(+) + H2O = (2E,6E)-farnesoate + NADPH + 2 H(+). It carries out the reaction (S)-(-)-citronellal + NADP(+) + H2O = (S)-(-)-citronellate + NADPH + 2 H(+). It participates in isoprenoid biosynthesis. Component of the monoterpenoid pyrethrins biosynthesis; pyrethrins are widely used plant-derived pesticide. Mediates the conversion of trans-chrysanthemal into trans-chrysanthemic acid. Can also use octanal, hept-2-enal, dodecanal, citral, farnesal, citronellal and perillyl aldehyde as substrates. This chain is Aldehyde dehydrogenase 1, found in Tanacetum cinerariifolium (Dalmatian daisy).